Here is a 580-residue protein sequence, read N- to C-terminus: Phosphatase and actin regulator 1 (580 aa).

Residues Ser-67 and Ser-78 each carry the phosphoserine modification. Thr-104 carries the post-translational modification Phosphothreonine. The Nuclear localization signal motif lies at Arg-108–Lys-129. An RPEL 1 repeat occupies Ala-138–Tyr-163. Residues Glu-331–Val-351 are disordered. Positions Ser-337–Ser-348 are enriched in low complexity. 3 RPEL repeats span residues Asp-422 to Thr-447, Thr-460 to Asn-485, and Arg-498 to Ser-523. The segment at Leu-462 to Arg-494 is disordered. At Ser-467 the chain carries Phosphoserine. The segment covering Thr-471 to Arg-494 has biased composition (basic and acidic residues). Ser-505 carries the post-translational modification Phosphoserine.

This sequence belongs to the phosphatase and actin regulator family. As to quaternary structure, interacts (via RPEL repeats) with ACTA1 and PPP1CA; ACTA1 and PPP1CA compete for the same binding site. Selectively expressed in brain. High levels are found in the olfactory tubercle, nucleus accumbens core and shell, caudate-putamen, cerebral cortex, hippocampus and piriform cortex. Moderate to high levels in the olfactory bulb, arcuate and ventromedial hypothalamus, subthalamic nucleus, amygdala, lateral septum, habenula and thalamus. Low expression, if any, in substantia nigra pars compacta/pars reticula and globus pallidus (at protein level).

The protein localises to the cytoplasm. The protein resides in the synapse. Its subcellular location is the nucleus. Binds actin monomers (G actin) and plays a role in multiple processes including the regulation of actin cytoskeleton dynamics, actin stress fibers formation, cell motility and survival, formation of tubules by endothelial cells, and regulation of PPP1CA activity. Involved in the regulation of cortical neuron migration and dendrite arborization. The chain is Phosphatase and actin regulator 1 (Phactr1) from Rattus norvegicus (Rat).